Consider the following 274-residue polypeptide: Hydroxyethylthiazole kinase (274 aa).

M46 serves as a coordination point for substrate. Positions 122 and 173 each coordinate ATP. G200 contacts substrate.

The protein belongs to the Thz kinase family. Mg(2+) is required as a cofactor.

It catalyses the reaction 5-(2-hydroxyethyl)-4-methylthiazole + ATP = 4-methyl-5-(2-phosphooxyethyl)-thiazole + ADP + H(+). It participates in cofactor biosynthesis; thiamine diphosphate biosynthesis; 4-methyl-5-(2-phosphoethyl)-thiazole from 5-(2-hydroxyethyl)-4-methylthiazole: step 1/1. Its function is as follows. Catalyzes the phosphorylation of the hydroxyl group of 4-methyl-5-beta-hydroxyethylthiazole (THZ). This Clostridium tetani (strain Massachusetts / E88) protein is Hydroxyethylthiazole kinase.